Reading from the N-terminus, the 273-residue chain is SPRY domain-containing SOCS box protein 1 (273 aa).

Tyr31 is subject to Phosphotyrosine. The 199-residue stretch at 33-231 folds into the B30.2/SPRY domain; the sequence is KPTRLDLLLD…IRMRYLNGLD (199 aa). In terms of domain architecture, SOCS box spans 232 to 273; the sequence is PEPLPLMDLCRRSVRLALGKGRLGEIHALPLPASLKAYLLYQ.

This sequence belongs to the SPSB family. Component of the probable ECS(SPSB1) E3 ubiquitin-protein ligase complex which contains CUL5, RNF7/RBX2, Elongin BC complex and SPSB1. Interacts with CUL5, RNF7, ELOB and ELOC. Directly interacts with MET tyrosine kinase domain in the presence and in the absence of HGF, however HGF treatment has a positive effect on this interaction. When phosphorylated, interacts with RASA1 without affecting its stability. Interacts (via B30.2/SPRY domain) with PAWR; this interaction is direct and occurs in association with the Elongin BC complex. Interacts with NOS2 and EPHB2.

It localises to the cytoplasm. It is found in the cytosol. It participates in protein modification; protein ubiquitination. Substrate recognition component of a SCF-like ECS (Elongin BC-CUL2/5-SOCS-box protein) E3 ubiquitin-protein ligase complex which mediates the ubiquitination and subsequent proteasomal degradation of target proteins. Negatively regulates nitric oxide (NO) production and limits cellular toxicity in activated macrophages by mediating the ubiquitination and proteasomal degradation of NOS2. Acts as a bridge which links NOS2 with the ECS E3 ubiquitin ligase complex components ELOC and CUL5. The polypeptide is SPRY domain-containing SOCS box protein 1 (SPSB1) (Bos taurus (Bovine)).